Reading from the N-terminus, the 398-residue chain is MSEQLLTASTSIDAAPLSDNTVQTTAPATSKINLLDLNRQQMREFFAEMGEKPFRADQVMKWMYHYCYDDFEQMTDINKGLRAKLQRVAEIRAPEVAEEQRSVDGTIKWAIKVGDQQVETVYIPEADRATLCVSSQVGCALECKFCSTAQQGFNRNLRVSEIIGQVWRAAKIIGSLKSTGTRPITNVVMMGMGEPLLNLNNVVPAMDIMMDDFGFGLSKRRVTLSTSGVVPALDKLGDMIDVALAISLHAPTDDIRDEIVPINRKYNIETFLAAVRRYLDKSKANGGRVTVEYVMLDHINDSTEQAHQLAECLKDTPCKINLIPWNPFPGAPYGRSSNSRVDRFSKVLMEYGFTTIVRKTRGDDIDAACGQLAGEVIDRTKRTLKKKMAGEPIAIKTV.

E119 serves as the catalytic Proton acceptor. The Radical SAM core domain occupies 125-364; the sequence is EADRATLCVS…TIVRKTRGDD (240 aa). A disulfide bond links C132 and C369. C139, C143, and C146 together coordinate [4Fe-4S] cluster. Residues 193-194, S225, 247-249, and N326 contribute to the S-adenosyl-L-methionine site; these read GE and SLH. Residue C369 is the S-methylcysteine intermediate of the active site.

It belongs to the radical SAM superfamily. RlmN family. It depends on [4Fe-4S] cluster as a cofactor.

It localises to the cytoplasm. The enzyme catalyses adenosine(2503) in 23S rRNA + 2 reduced [2Fe-2S]-[ferredoxin] + 2 S-adenosyl-L-methionine = 2-methyladenosine(2503) in 23S rRNA + 5'-deoxyadenosine + L-methionine + 2 oxidized [2Fe-2S]-[ferredoxin] + S-adenosyl-L-homocysteine. It catalyses the reaction adenosine(37) in tRNA + 2 reduced [2Fe-2S]-[ferredoxin] + 2 S-adenosyl-L-methionine = 2-methyladenosine(37) in tRNA + 5'-deoxyadenosine + L-methionine + 2 oxidized [2Fe-2S]-[ferredoxin] + S-adenosyl-L-homocysteine. Its function is as follows. Specifically methylates position 2 of adenine 2503 in 23S rRNA and position 2 of adenine 37 in tRNAs. m2A2503 modification seems to play a crucial role in the proofreading step occurring at the peptidyl transferase center and thus would serve to optimize ribosomal fidelity. This Yersinia pseudotuberculosis serotype O:3 (strain YPIII) protein is Dual-specificity RNA methyltransferase RlmN.